Here is a 100-residue protein sequence, read N- to C-terminus: Small ribosomal subunit protein uS14c (100 aa).

Belongs to the universal ribosomal protein uS14 family. As to quaternary structure, part of the 30S ribosomal subunit.

It is found in the plastid. It localises to the chloroplast. In terms of biological role, binds 16S rRNA, required for the assembly of 30S particles. The sequence is that of Small ribosomal subunit protein uS14c from Pelargonium hortorum (Common geranium).